We begin with the raw amino-acid sequence, 235 residues long: Putative HAD-hydrolase YfnB (235 aa).

D10 functions as the Nucleophile in the catalytic mechanism.

The protein belongs to the HAD-like hydrolase superfamily. YjjG family.

This chain is Putative HAD-hydrolase YfnB (yfnB), found in Bacillus subtilis (strain 168).